The following is a 2181-amino-acid chain: Non-reducing polyketide synthase dpmaA (2181 aa).

An N-terminal acylcarrier protein transacylase domain (SAT) region spans residues 74-180; that stretch reads QWVKGNSTQP…LALCCGAYID (107 aa). The Ketosynthase family 3 (KS3) domain occupies 347–779; sequence QAQLLVLGPV…GTNAAMLVCQ (433 aa). Residues C525, H661, and H702 each act as for beta-ketoacyl synthase activity in the active site. The malonyl-CoA:ACP transacylase (MAT) domain stretch occupies residues 891–1193; that stretch reads VLAGQTGRRV…SFYPAALGEP (303 aa). S977 acts as the For acyl/malonyl transferase activity in catalysis. The tract at residues 1269–1401 is N-terminal hotdog fold; it reads VSLIGKTQNA…GVITLQEVYS (133 aa). One can recognise a PKS/mFAS DH domain in the interval 1269–1579; the sequence is VSLIGKTQNA…FQKIAISSLK (311 aa). The interval 1276-1573 is product template (PT) domain; it reads QNAGVQTVEY…TILGAKFQKI (298 aa). The segment at 1425–1579 is C-terminal hotdog fold; it reads SASVVQGDFI…FQKIAISSLK (155 aa). Polar residues predominate over residues 1587–1603; the sequence is GVPQTSGGRTPSSSITE. Disordered stretches follow at residues 1587-1618 and 1652-1675; these read GVPQ…PIPG and ISGS…AMET. The span at 1653-1670 shows a compositional bias: low complexity; that stretch reads SGSSRSTSSSPPSLESRS. Positions 1677–1753 constitute a Carrier domain; the sequence is EITEGAGSAL…TLFHTIFPQQ (77 aa). S1713 carries the post-translational modification O-(pantetheine 4'-phosphoryl)serine. The tract at residues 1982 to 2164 is methyltransferase (CMeT) domain; sequence EFMNCLFSYN…QSGFDHIDWT (183 aa).

It participates in secondary metabolite biosynthesis; terpenoid biosynthesis. Non-reducing polyketide synthase; part of the gene cluster that mediates the biosynthesis of the diterpenoid pyrones subglutinols A and B. The first step of the pathway is the synthesis of the alpha-pyrone moiety by the polyketide synthase dpmaA via condensation of one acetyl-CoA starter unit with 3 malonyl-CoA units and 2 methylations. The alpha-pyrone is then combined with geranylgeranyl pyrophosphate (GGPP) formed by the GGPP synthase dpmaD through the action of the prenyltransferase dpmaC to yield a linear alpha-pyrone diterpenoid. Subsequent steps in the diterpenoid pyrone biosynthetic pathway involve the decalin core formation, which is initiated by the epoxidation of the C10-C11 olefin by the FAD-dependent oxidoreductase dpmaE, and is followed by a cyclization cascade catalyzed by the terpene cyclase dpmaB. The dehydrogenase dpmaF is then involved in tetrahydrofuran (THF) ring formation at the C5 unit to complete the formation of subglutinols A and B. This chain is Non-reducing polyketide synthase dpmaA, found in Metarhizium anisopliae (Entomophthora anisopliae).